A 108-amino-acid polypeptide reads, in one-letter code: Cell wall protein PGA48 (108 aa).

An N-terminal signal peptide occupies residues 1–17 (MFKFVIYLFTFIAFANA). N18, N41, and N77 each carry an N-linked (GlcNAc...) asparagine glycan. N84 is lipidated: GPI-anchor amidated asparagine. A propeptide spans 85–108 (GASKLNLRSLAGAGLVAAIFIAFI) (removed in mature form).

It belongs to the SED1 family. The GPI-anchor is attached to the protein in the endoplasmic reticulum and serves to target the protein to the cell surface. There, the glucosamine-inositol phospholipid moiety is cleaved off and the GPI-modified mannoprotein is covalently attached via its lipidless GPI glycan remnant to the 1,6-beta-glucan of the outer cell wall layer.

It localises to the secreted. The protein resides in the cell wall. The protein localises to the membrane. Functionally, cell wall protein that plays a role in adaptation and resistance to cell wall stress. The chain is Cell wall protein PGA48 (PGA48) from Candida albicans (strain SC5314 / ATCC MYA-2876) (Yeast).